The primary structure comprises 400 residues: Ribose-phosphate pyrophosphokinase 2, chloroplastic (400 aa).

Residues 1-44 (MASLALTSPPSVKIPSYLSSSSSSLFSRSSISFRTTESRSRICV) constitute a chloroplast transit peptide. Positions 214, 216, 225, and 229 each coordinate Mg(2+). Positions 300-315 (GKVAVMVDDIIDTAGT) are binding of phosphoribosylpyrophosphate.

This sequence belongs to the ribose-phosphate pyrophosphokinase family.

It is found in the plastid. It localises to the chloroplast. It carries out the reaction D-ribose 5-phosphate + ATP = 5-phospho-alpha-D-ribose 1-diphosphate + AMP + H(+). The sequence is that of Ribose-phosphate pyrophosphokinase 2, chloroplastic (PRS2) from Arabidopsis thaliana (Mouse-ear cress).